Here is a 1609-residue protein sequence, read N- to C-terminus: Laminin subunit gamma-1 (1609 aa).

The first 33 residues, 1–33 (MRGSHRAAPALRPRGRLWPVLAVLAAAAAAGCA), serve as a signal peptide directing secretion. The Laminin N-terminal domain occupies 46–285 (RPQRCMPEFV…AISDFAVGGR (240 aa)). 2 N-linked (GlcNAc...) asparagine glycosylation sites follow: Asn-60 and Asn-134. 16 disulfide bridges follow: Cys-286/Cys-295, Cys-288/Cys-305, Cys-307/Cys-316, Cys-319/Cys-339, Cys-342/Cys-351, Cys-344/Cys-367, Cys-370/Cys-379, Cys-382/Cys-395, Cys-398/Cys-410, Cys-400/Cys-416, Cys-418/Cys-427, Cys-430/Cys-442, Cys-445/Cys-456, Cys-447/Cys-463, Cys-465/Cys-474, and Cys-477/Cys-492. Laminin EGF-like domains follow at residues 286 to 341 (CKCN…ECLP), 342 to 397 (CDCN…ACSS), 398 to 444 (CHCS…GCRP), and 445 to 494 (CSCD…GCTP). The 10-residue stretch at 495–504 (CFCFGHSSVC) folds into the Laminin EGF-like 5; first part domain. In terms of domain architecture, Laminin IV type A spans 514–689 (SISSTFQIDE…PGVPATWVES (176 aa)). Residues Asn-576 and Asn-650 are each glycosylated (N-linked (GlcNAc...) asparagine). One can recognise a Laminin EGF-like 5; second part domain in the interval 690-723 (CTCPVGYGGQFCEMCLSGYRRETPNLGPYSPCVL). Intrachain disulfides connect Cys-724–Cys-733, Cys-726–Cys-740, Cys-742–Cys-751, Cys-754–Cys-770, Cys-773–Cys-781, Cys-775–Cys-792, Cys-795–Cys-804, Cys-807–Cys-825, Cys-828–Cys-842, Cys-830–Cys-849, Cys-852–Cys-861, Cys-864–Cys-881, Cys-884–Cys-898, Cys-886–Cys-905, Cys-907–Cys-916, Cys-919–Cys-932, Cys-935–Cys-947, Cys-937–Cys-954, Cys-956–Cys-965, Cys-968–Cys-980, Cys-983–Cys-995, Cys-985–Cys-1001, Cys-1003–Cys-1012, and Cys-1015–Cys-1028. Laminin EGF-like domains follow at residues 724-772 (CACN…DCQP), 773-827 (CPCP…LCRL), 828-883 (CQCS…KCKA), 884-934 (CNCN…GCER), 935-982 (CDCH…GCKP), and 983-1030 (CDCH…GCQE). 2 N-linked (GlcNAc...) asparagine glycosylation sites follow: Asn-1022 and Asn-1107. The interval 1030–1609 (ECPACYRLVK…CFNTPSIEKP (580 aa)) is domain II and I. Residues 1038 to 1609 (VKDKVADHRV…CFNTPSIEKP (572 aa)) are a coiled coil. Residue Ser-1149 is modified to Phosphoserine; by FAM20C. 8 N-linked (GlcNAc...) asparagine glycosylation sites follow: Asn-1161, Asn-1175, Asn-1205, Asn-1223, Asn-1241, Asn-1380, Asn-1395, and Asn-1439. A Phosphoserine modification is found at Ser-1493.

Laminin is a complex glycoprotein, consisting of three different polypeptide chains (alpha, beta, gamma), which are bound to each other by disulfide bonds into a cross-shaped molecule comprising one long and three short arms with globules at each end. Gamma-1 is a subunit of laminin-1 (laminin-111 or EHS laminin), laminin-2 (laminin-211 or merosin), laminin-3 (laminin-121 or S-laminin), laminin-4 (laminin-221 or S-merosin), laminin-6 (laminin-311 or K-laminin), laminin-7 (laminin-321 or KS-laminin), laminin-8 (laminin-411), laminin-9 (laminin-421), laminin-10 (laminin-511) and laminin-11 (laminin-521). Interacts with SVEP1. In terms of tissue distribution, found in the basement membranes (major component).

It localises to the secreted. It is found in the extracellular space. The protein resides in the extracellular matrix. The protein localises to the basement membrane. In terms of biological role, binding to cells via a high affinity receptor, laminin is thought to mediate the attachment, migration and organization of cells into tissues during embryonic development by interacting with other extracellular matrix components. The sequence is that of Laminin subunit gamma-1 from Homo sapiens (Human).